Reading from the N-terminus, the 303-residue chain is Crk-like protein (303 aa).

The 89-residue stretch at 14–102 folds into the SH2 domain; that stretch reads WYMGPVSRQE…LDTTTLIEPA (89 aa). The SH3 1 domain maps to 123–183; it reads ENLEYVRTLY…PVPYVEKLVR (61 aa). Phosphotyrosine is present on Tyr-127. Positions 184–204 are disordered; sequence SSPHGKHGNRNSNSYGIPEPA. Tyr-207 is modified (phosphotyrosine). The 62-residue stretch at 235 to 296 folds into the SH3 2 domain; that stretch reads NGPVFAKAIQ…PFTHVKIFDP (62 aa).

Belongs to the CRK family. In terms of assembly, interacts with INPP5D/SHIP1. Interacts with DOCK2 and EPOR. Interacts with phosphorylated CBLB and IRS4. Interacts with BCAR1/CAS and NEDD9/HEF1.

Its function is as follows. May mediate the transduction of intracellular signals. This Rattus norvegicus (Rat) protein is Crk-like protein.